The chain runs to 78 residues: Small ribosomal subunit protein uS17 (78 aa).

It belongs to the universal ribosomal protein uS17 family. Part of the 30S ribosomal subunit.

Functionally, one of the primary rRNA binding proteins, it binds specifically to the 5'-end of 16S ribosomal RNA. The sequence is that of Small ribosomal subunit protein uS17 from Sinorhizobium medicae (strain WSM419) (Ensifer medicae).